We begin with the raw amino-acid sequence, 436 residues long: GTPase Der (436 aa).

EngA-type G domains follow at residues 3-168 and 177-352; these read PLIA…PESD and IRLA…DNRA. GTP is bound by residues 9–16, 56–60, 120–123, 183–190, 230–234, and 295–298; these read GRPNVGKS, DTGGY, NKVE, DTAGL, and NKWD. Residues 353–436 form the KH-like domain; sequence RKISTSALNR…VTISLRFLQK (84 aa).

It belongs to the TRAFAC class TrmE-Era-EngA-EngB-Septin-like GTPase superfamily. EngA (Der) GTPase family. As to quaternary structure, associates with the 50S ribosomal subunit.

GTPase that plays an essential role in the late steps of ribosome biogenesis. The protein is GTPase Der of Chlorobium phaeovibrioides (strain DSM 265 / 1930) (Prosthecochloris vibrioformis (strain DSM 265)).